The chain runs to 152 residues: Large ribosomal subunit protein uL15 (152 aa).

Positions 1-57 (MTSTLNTLKSNSGSRKKKLRKGRGIAAGQGASCGFGMRGQKSRSGRPTRPGFEGGQM) are disordered. Positions 14–23 (SRKKKLRKGR) are enriched in basic residues. Over residues 25–37 (IAAGQGASCGFGM) the composition is skewed to gly residues.

It belongs to the universal ribosomal protein uL15 family. Part of the 50S ribosomal subunit.

Its function is as follows. Binds to the 23S rRNA. This is Large ribosomal subunit protein uL15 from Prochlorococcus marinus (strain AS9601).